The following is a 487-amino-acid chain: Protein nucleotidyltransferase YdiU (487 aa).

Residues Gly-90, Gly-92, Arg-93, Lys-113, Asp-125, Gly-126, Arg-176, and Arg-183 each contribute to the ATP site. The active-site Proton acceptor is the Asp-252. Asn-253 and Asp-262 together coordinate Mg(2+). Residue Asp-262 participates in ATP binding.

Belongs to the SELO family. It depends on Mg(2+) as a cofactor. Mn(2+) serves as cofactor.

It catalyses the reaction L-seryl-[protein] + ATP = 3-O-(5'-adenylyl)-L-seryl-[protein] + diphosphate. The catalysed reaction is L-threonyl-[protein] + ATP = 3-O-(5'-adenylyl)-L-threonyl-[protein] + diphosphate. The enzyme catalyses L-tyrosyl-[protein] + ATP = O-(5'-adenylyl)-L-tyrosyl-[protein] + diphosphate. It carries out the reaction L-histidyl-[protein] + UTP = N(tele)-(5'-uridylyl)-L-histidyl-[protein] + diphosphate. It catalyses the reaction L-seryl-[protein] + UTP = O-(5'-uridylyl)-L-seryl-[protein] + diphosphate. The catalysed reaction is L-tyrosyl-[protein] + UTP = O-(5'-uridylyl)-L-tyrosyl-[protein] + diphosphate. Functionally, nucleotidyltransferase involved in the post-translational modification of proteins. It can catalyze the addition of adenosine monophosphate (AMP) or uridine monophosphate (UMP) to a protein, resulting in modifications known as AMPylation and UMPylation. This is Protein nucleotidyltransferase YdiU from Pseudomonas savastanoi pv. phaseolicola (strain 1448A / Race 6) (Pseudomonas syringae pv. phaseolicola (strain 1448A / Race 6)).